Here is a 225-residue protein sequence, read N- to C-terminus: Methylthioribulose-1-phosphate dehydratase (225 aa).

H106 and H108 together coordinate Zn(2+).

It belongs to the aldolase class II family. MtnB subfamily. The cofactor is Zn(2+).

It carries out the reaction 5-(methylsulfanyl)-D-ribulose 1-phosphate = 5-methylsulfanyl-2,3-dioxopentyl phosphate + H2O. It functions in the pathway amino-acid biosynthesis; L-methionine biosynthesis via salvage pathway; L-methionine from S-methyl-5-thio-alpha-D-ribose 1-phosphate: step 2/6. Its function is as follows. Catalyzes the dehydration of methylthioribulose-1-phosphate (MTRu-1-P) into 2,3-diketo-5-methylthiopentyl-1-phosphate (DK-MTP-1-P). This Xanthomonas oryzae pv. oryzae (strain MAFF 311018) protein is Methylthioribulose-1-phosphate dehydratase.